The sequence spans 429 residues: Enolase (429 aa).

Position 162 (glutamine 162) interacts with (2R)-2-phosphoglycerate. Glutamate 204 functions as the Proton donor in the catalytic mechanism. Mg(2+) is bound by residues aspartate 241, glutamate 283, and aspartate 310. Residues lysine 335, arginine 364, serine 365, and lysine 386 each contribute to the (2R)-2-phosphoglycerate site. The Proton acceptor role is filled by lysine 335.

It belongs to the enolase family. Mg(2+) serves as cofactor.

Its subcellular location is the cytoplasm. It is found in the secreted. It localises to the cell surface. The enzyme catalyses (2R)-2-phosphoglycerate = phosphoenolpyruvate + H2O. The protein operates within carbohydrate degradation; glycolysis; pyruvate from D-glyceraldehyde 3-phosphate: step 4/5. In terms of biological role, catalyzes the reversible conversion of 2-phosphoglycerate (2-PG) into phosphoenolpyruvate (PEP). It is essential for the degradation of carbohydrates via glycolysis. This is Enolase from Mycobacterium sp. (strain JLS).